Here is a 291-residue protein sequence, read N- to C-terminus: 4-hydroxy-tetrahydrodipicolinate synthase (291 aa).

Threonine 47 provides a ligand contact to pyruvate. The active-site Proton donor/acceptor is the tyrosine 134. Catalysis depends on lysine 162, which acts as the Schiff-base intermediate with substrate. Isoleucine 205 lines the pyruvate pocket.

The protein belongs to the DapA family. Homotetramer; dimer of dimers.

It is found in the cytoplasm. The catalysed reaction is L-aspartate 4-semialdehyde + pyruvate = (2S,4S)-4-hydroxy-2,3,4,5-tetrahydrodipicolinate + H2O + H(+). It participates in amino-acid biosynthesis; L-lysine biosynthesis via DAP pathway; (S)-tetrahydrodipicolinate from L-aspartate: step 3/4. Its function is as follows. Catalyzes the condensation of (S)-aspartate-beta-semialdehyde [(S)-ASA] and pyruvate to 4-hydroxy-tetrahydrodipicolinate (HTPA). The chain is 4-hydroxy-tetrahydrodipicolinate synthase from Methanosphaerula palustris (strain ATCC BAA-1556 / DSM 19958 / E1-9c).